The chain runs to 133 residues: Transcription antitermination protein NusB (133 aa).

This sequence belongs to the NusB family.

Its function is as follows. Involved in transcription antitermination. Required for transcription of ribosomal RNA (rRNA) genes. Binds specifically to the boxA antiterminator sequence of the ribosomal RNA (rrn) operons. The polypeptide is Transcription antitermination protein NusB (Clostridium botulinum (strain Alaska E43 / Type E3)).